The following is a 250-amino-acid chain: Galectin-3 (250 aa).

The tract at residues 1-60 is disordered; that stretch reads MADNFSLHDALSGSGNPNPQGWPGAWGNQPAGAGGYPGASYPGAYPGQAPPGAYPGQAPP. Ala2 is modified (N-acetylalanine). A phosphoserine mark is found at Ser6 and Ser12. Repeat copies occupy residues 36 to 44, 45 to 53, and 54 to 62. Residues 36 to 109 form an 8 X 9 AA tandem repeats of Y-P-G-X(3)-P-G-A region; sequence YPGASYPGAY…AYPATGPYGA (74 aa). Residues 38–47 show a composition bias toward low complexity; sequence GASYPGAYPG. Positions 48 to 60 are enriched in pro residues; the sequence is QAPPGAYPGQAPP. The 4; approximate repeat unit spans residues 63–69; the sequence is YPGAPGA. Repeat 5 spans residues 70–78; that stretch reads YPGAPAPGV. The stretch at 79-88 is one 6; approximate repeat; sequence YPGPPSGPGA. Residues 89–100 form a 7; approximate repeat; sequence YPSSGQPSATGA. Residues 101 to 109 form an 8; approximate repeat; sequence YPATGPYGA. One can recognise a Galectin domain in the interval 118 to 248; the sequence is YNLPLPGGVV…DIDLTSASYT (131 aa). 181–187 contributes to the a beta-D-galactoside binding site; the sequence is WGREERQ. At Ser188 the chain carries Phosphoserine. The short motif at 226–241 is the Nuclear export signal element; it reads KKLNEISKLGISGDID.

In terms of assembly, probably forms homo- or heterodimers. Interacts with DMBT1. Interacts with CD6 and ALCAM. Forms a complex with the ITGA3, ITGB1 and CSPG4. Interacts with LGALS3BP, LYPD3, ZFTRAF1 and UACA. Interacts with TRIM16; this interaction mediates autophagy of damage endomembranes. Interacts with cargo receptor TMED10; the interaction mediates the translocation from the cytoplasm into the ERGIC (endoplasmic reticulum-Golgi intermediate compartment) and thereby secretion. As to expression, a major expression is found in the colonic epithelium. It is also abundant in the activated macrophages. Expressed in fetal membranes.

It localises to the cytoplasm. The protein resides in the nucleus. The protein localises to the secreted. Its function is as follows. Galactose-specific lectin which binds IgE. May mediate with the alpha-3, beta-1 integrin the stimulation by CSPG4 of endothelial cells migration. Together with DMBT1, required for terminal differentiation of columnar epithelial cells during early embryogenesis. In the nucleus: acts as a pre-mRNA splicing factor. Involved in acute inflammatory responses including neutrophil activation and adhesion, chemoattraction of monocytes macrophages, opsonization of apoptotic neutrophils, and activation of mast cells. Together with TRIM16, coordinates the recognition of membrane damage with mobilization of the core autophagy regulators ATG16L1 and BECN1 in response to damaged endomembranes. This Homo sapiens (Human) protein is Galectin-3.